Reading from the N-terminus, the 580-residue chain is Glutamine--tRNA ligase (580 aa).

The 'HIGH' region signature appears at 51 to 61 (PEPNGYLHIGH). Residues 52–54 (EPN) and 58–64 (HIGHAKS) each bind ATP. The L-glutamine site is built by aspartate 84 and tyrosine 233. Residues threonine 252 and 287-288 (RL) contribute to the ATP site. Positions 294-298 (ITSKR) match the 'KMSKS' region motif.

It belongs to the class-I aminoacyl-tRNA synthetase family. As to quaternary structure, monomer.

It localises to the cytoplasm. The catalysed reaction is tRNA(Gln) + L-glutamine + ATP = L-glutaminyl-tRNA(Gln) + AMP + diphosphate. The polypeptide is Glutamine--tRNA ligase (Ralstonia nicotianae (strain ATCC BAA-1114 / GMI1000) (Ralstonia solanacearum)).